The sequence spans 169 residues: Endoribonuclease YbeY (169 aa).

Positions 128, 132, and 138 each coordinate Zn(2+).

Belongs to the endoribonuclease YbeY family. Requires Zn(2+) as cofactor.

It is found in the cytoplasm. Single strand-specific metallo-endoribonuclease involved in late-stage 70S ribosome quality control and in maturation of the 3' terminus of the 16S rRNA. The protein is Endoribonuclease YbeY of Rhizorhabdus wittichii (strain DSM 6014 / CCUG 31198 / JCM 15750 / NBRC 105917 / EY 4224 / RW1) (Sphingomonas wittichii).